The chain runs to 181 residues: Inner membrane-spanning protein YciB (181 aa).

Transmembrane regions (helical) follow at residues 10–30, 50–70, 80–100, 118–138, and 148–168; these read LVIF…GALI, MHLI…ILHD, IVYA…KPIL, VTWY…YVAF, and FKVF…VFYL.

This sequence belongs to the YciB family.

It is found in the cell inner membrane. Its function is as follows. Plays a role in cell envelope biogenesis, maintenance of cell envelope integrity and membrane homeostasis. In Shewanella piezotolerans (strain WP3 / JCM 13877), this protein is Inner membrane-spanning protein YciB.